The chain runs to 802 residues: MRRLTMYPEQPDENRESIVMPLFEVVVYPKSRAKFLADKVTGEILLNDMKNAESVSAIGLTVKNGTKASDLSEESLYKIGNLLNITYVQPSDDGYLVVAKGIERVEAVSLYQKNGLFYATYRPVHDLPDFDEDAETEVMANIKKTIHEISARFQGSEQFTKSIDKMDSIDQIMGFVMPYIPVKLAEKQRLLELASVRERYLLFLHILTKHKENINLQIEMAKKVTDKISKSNREAMLREQLKVIQEELNEGDDSASGDAAYREKIENSTMPDEVKKKAFSELKKLETGGSHNPEAPGIRNYLDLLLDLPWITEEKKSIDIAEARRVLESNHNGLEKVKERIIQHLAVMKLKHEKQGSILLLIGPPGTGKTSLGKSIADALGRKYIRISLGGVKDEAEIRGHRRTYIGALPGRIIQGMRKAGTKNPVFILDEVDKLSASYSGDPASALLEVLDPEQNSTFSDHYLEIPYDLSDVLFIATANSMANIPWPLLDRMETIEISGYTKNEKLAIAKDHLVPCILEDHGLDAEKLKIEDEALKVIIDKYTREAGVRGLKKQLAKTARFVSEKIVSGKADLPYVVRADMLKEILGKEIIRQEEARKENVPGVVTGLAWTPVGGDILFIEGTFMPGSGKLTLTGQLGDVMKESAKISLSLVRSRLANTANSFDFTSSDIHIHVPSGATPKDGPSAGVTLFTALTSLIIGKAVDPKLAMTGEITLSGAVLPVGGIKEKVLAAHRAGIKKIILPKENERDLEDVPEDARNELQFVPVETIEEVLREALDIDLPRPVVPSSYPGSSYAPAHSV.

A Lon N-terminal domain is found at 17–211; the sequence is SIVMPLFEVV…LFLHILTKHK (195 aa). 363–370 contacts ATP; the sequence is GPPGTGKT. Residues 600–780 form the Lon proteolytic domain; the sequence is ENVPGVVTGL…EEVLREALDI (181 aa). Active-site residues include Ser686 and Lys729.

Belongs to the peptidase S16 family. As to quaternary structure, homohexamer. Organized in a ring with a central cavity.

The protein localises to the cytoplasm. It catalyses the reaction Hydrolysis of proteins in presence of ATP.. ATP-dependent serine protease that mediates the selective degradation of mutant and abnormal proteins as well as certain short-lived regulatory proteins. Required for cellular homeostasis and for survival from DNA damage and developmental changes induced by stress. Degrades polypeptides processively to yield small peptide fragments that are 5 to 10 amino acids long. Binds to DNA in a double-stranded, site-specific manner. This is Lon protease from Methanosarcina barkeri (strain Fusaro / DSM 804).